The chain runs to 81 residues: ATP synthase subunit c (81 aa).

2 consecutive transmembrane segments (helical) span residues 14–34 (YLGAGLAAIGCIGGGVGIGTV) and 60–80 (LAFAEVTSLYALFVAIMLLFV).

Belongs to the ATPase C chain family. In terms of assembly, F-type ATPases have 2 components, F(1) - the catalytic core - and F(0) - the membrane proton channel. F(1) has five subunits: alpha(3), beta(3), gamma(1), delta(1), epsilon(1). F(0) has three main subunits: a(1), b(2) and c(10-14). The alpha and beta chains form an alternating ring which encloses part of the gamma chain. F(1) is attached to F(0) by a central stalk formed by the gamma and epsilon chains, while a peripheral stalk is formed by the delta and b chains.

It localises to the cell membrane. F(1)F(0) ATP synthase produces ATP from ADP in the presence of a proton or sodium gradient. F-type ATPases consist of two structural domains, F(1) containing the extramembraneous catalytic core and F(0) containing the membrane proton channel, linked together by a central stalk and a peripheral stalk. During catalysis, ATP synthesis in the catalytic domain of F(1) is coupled via a rotary mechanism of the central stalk subunits to proton translocation. Its function is as follows. Key component of the F(0) channel; it plays a direct role in translocation across the membrane. A homomeric c-ring of between 10-14 subunits forms the central stalk rotor element with the F(1) delta and epsilon subunits. The sequence is that of ATP synthase subunit c from Clostridium acetobutylicum (strain ATCC 824 / DSM 792 / JCM 1419 / IAM 19013 / LMG 5710 / NBRC 13948 / NRRL B-527 / VKM B-1787 / 2291 / W).